We begin with the raw amino-acid sequence, 242 residues long: Protein GrpE (242 aa).

Over residues 1 to 10 (MAGENSSTET) the composition is skewed to polar residues. The segment at 1–64 (MAGENSSTET…QSTESTSKEK (64 aa)) is disordered. Basic and acidic residues predominate over residues 11–20 (KNQEINEKTP). Polar residues-rich tracts occupy residues 21-32 (EVQTFETNVEFE) and 40-59 (DTELSADNASIDTDIQSTES).

The protein belongs to the GrpE family. As to quaternary structure, homodimer.

The protein localises to the cytoplasm. In terms of biological role, participates actively in the response to hyperosmotic and heat shock by preventing the aggregation of stress-denatured proteins, in association with DnaK and GrpE. It is the nucleotide exchange factor for DnaK and may function as a thermosensor. Unfolded proteins bind initially to DnaJ; upon interaction with the DnaJ-bound protein, DnaK hydrolyzes its bound ATP, resulting in the formation of a stable complex. GrpE releases ADP from DnaK; ATP binding to DnaK triggers the release of the substrate protein, thus completing the reaction cycle. Several rounds of ATP-dependent interactions between DnaJ, DnaK and GrpE are required for fully efficient folding. This chain is Protein GrpE, found in Trichodesmium erythraeum (strain IMS101).